A 454-amino-acid polypeptide reads, in one-letter code: tRNA modification GTPase MnmE (454 aa).

(6S)-5-formyl-5,6,7,8-tetrahydrofolate is bound by residues R23, E80, and K120. Positions 216–377 constitute a TrmE-type G domain; sequence GMKVVIAGRP…LRNHLKQSMG (162 aa). N226 contributes to the K(+) binding site. GTP is bound by residues 226 to 231, 245 to 251, 270 to 273, 335 to 338, and 358 to 360; these read NAGKSS, TDIAGTT, DTAG, NKAD, and SAR. Position 230 (S230) interacts with Mg(2+). Positions 245, 247, and 250 each coordinate K(+). T251 is a binding site for Mg(2+). (6S)-5-formyl-5,6,7,8-tetrahydrofolate is bound at residue K454.

The protein belongs to the TRAFAC class TrmE-Era-EngA-EngB-Septin-like GTPase superfamily. TrmE GTPase family. Homodimer. Heterotetramer of two MnmE and two MnmG subunits. K(+) serves as cofactor.

The protein resides in the cytoplasm. Functionally, exhibits a very high intrinsic GTPase hydrolysis rate. Involved in the addition of a carboxymethylaminomethyl (cmnm) group at the wobble position (U34) of certain tRNAs, forming tRNA-cmnm(5)s(2)U34. This is tRNA modification GTPase MnmE from Shigella boydii serotype 18 (strain CDC 3083-94 / BS512).